Reading from the N-terminus, the 256-residue chain is Calsenilin (256 aa).

Residues 1 to 22 (MQRTKEAVKASDGNLLGDPGRI) form a disordered region. Lysine 26 is covalently cross-linked (Glycyl lysine isopeptide (Lys-Gly) (interchain with G-Cter in SUMO1)). Residues cysteine 45 and cysteine 46 are each lipidated (S-palmitoyl cysteine). Phosphoserine occurs at positions 60 and 63. In terms of domain architecture, EF-hand 1; degenerate spans 67–123 (LELSTVRHQPEGLDQLQAQTKFTKKELQSLYRGFKNECPTGLVDEDTFKLIYSQFFP). Lysine 90 participates in a covalent cross-link: Glycyl lysine isopeptide (Lys-Gly) (interchain with G-Cter in SUMO1). EF-hand domains follow at residues 126–161 (DATT…LLRG), 162–197 (TVHE…IYDM), and 210–245 (APLE…DENI). Ca(2+)-binding residues include aspartate 175, asparagine 177, aspartate 179, cysteine 181, glutamate 186, aspartate 223, asparagine 225, aspartate 227, and glutamate 234. The segment at 243 to 256 (ENIMNSMQLFENVI) is interaction with KCND2.

This sequence belongs to the recoverin family. As to quaternary structure, binds to DNA as a homomultimer. Dimerization is induced by binding to calcium. Interacts with the C-terminus of PSEN1 and PSEN2 and with PSEN2 CTF subunit. Associates with KCN1. Component of heteromultimeric potassium channels. Identified in potassium channel complexes containing KCND1, KCND2, KCND3, KCNIP1, KCNIP2, KCNIP3, KCNIP4, DPP6 and DPP10. Interacts with KCND2 and KCND3. Palmitoylated. Palmitoylation enhances association with the plasma membrane. In terms of processing, proteolytically cleaved by caspase-3. In terms of tissue distribution, highly expressed in brain. Isoform 1 or isoform 4 (T+ forms) are expressed at equal levels with isoform 2 or isoform 3 (T- forms). Primarily detected in the layer V and deep layer VI of the cerebral cortex, the hippocampus, and the entire cerebellum. Expressed at low levels in testis. Also expressed in heart.

It is found in the cytoplasm. It localises to the cell membrane. The protein localises to the endoplasmic reticulum. The protein resides in the golgi apparatus. Its subcellular location is the nucleus. Calcium-dependent transcriptional repressor that binds to the DRE element of genes including PDYN and FOS. Affinity for DNA is reduced upon binding to calcium and enhanced by binding to magnesium. Seems to be involved in nociception. Functionally, regulatory subunit of Kv4/D (Shal)-type voltage-gated rapidly inactivating A-type potassium channels, such as KCND2/Kv4.2 and KCND3/Kv4.3. Modulates channel expression at the cell membrane, gating characteristics, inactivation kinetics and rate of recovery from inactivation in a calcium-dependent and isoform-specific manner. In terms of biological role, may play a role in the regulation of PSEN2 proteolytic processing and apoptosis. Together with PSEN2 involved in modulation of amyloid-beta formation. The polypeptide is Calsenilin (Kcnip3) (Mus musculus (Mouse)).